A 239-amino-acid chain; its full sequence is Protein UL20 homolog (239 aa).

Transmembrane regions (helical) follow at residues 65 to 81, 140 to 156, and 189 to 208; these read PSFSAHVVLFAISALVI, FVIGCMALGRTVAFMVV, and LMPLISVRSAVCLVIISTAV.

This sequence belongs to the alphaherpesvirinae UL20 family. In terms of assembly, interacts with gK (via N-terminus); this interaction plays a role in the coordinate transport of UL20 and gK to the trans-Golgi network (TGN), and is required for their cell surface expression. Interacts with gB.

The protein localises to the virion. It localises to the host cell membrane. It is found in the host endosome membrane. The protein resides in the host Golgi apparatus membrane. Its subcellular location is the host nucleus membrane. Its function is as follows. Plays an essential role in egress of virus particles from the nucleus, cytoplasmic envelopment and virus-induced cell fusion. Forms a functional protein complex with gK and this interaction is absolutely essential for their coordinate intracellular transport, gK glycosylation, expression on host cell surface, and function. Together, they modulate gB-mediated virus-induced cell fusion and virion egress and therefore actively participate in these processes. This chain is Protein UL20 homolog, found in Equus caballus (Horse).